The primary structure comprises 1129 residues: A-kinase anchor protein 11 (1129 aa).

The segment covering 1–12 has biased composition (basic residues); the sequence is MQKMQCHLRRPL. Residues 1–21 form a disordered region; that stretch reads MQKMQCHLRRPLHSSSSFSSQ. Residues threonine 251 and threonine 363 each carry the phosphothreonine modification. 3 disordered regions span residues 354–376, 394–416, and 434–455; these read IRDR…QTSS, EFAP…SENE, and SEEV…SEHS. Residues 404–416 are compositionally biased toward polar residues; the sequence is PHNSSVGSLSENE. A phosphoserine mark is found at serine 434, serine 439, and serine 440. Basic and acidic residues predominate over residues 442 to 455; that stretch reads GEEHPEMDVKSEHS. Position 595 is a phosphoserine (serine 595). Phosphothreonine is present on threonine 742. The residue at position 835 (serine 835) is a Phosphoserine. The interval 905 to 918 is PKA-RII binding region; it reads LAEKIVAEAIEKAE. A disordered region spans residues 962-1061; sequence SKEVEDFQST…QEDGAEGLQP (100 aa). A compositionally biased stretch (polar residues) spans 968–995; that stretch reads FQSTESLGSQQMNLSVGEDSTGSWSNLS. A compositionally biased stretch (basic and acidic residues) spans 1002-1011; the sequence is DESSSFHHLS. Residues 1012-1028 are compositionally biased toward low complexity; it reads ESSNGNSSSWSSLGLEG. The span at 1033 to 1042 shows a compositional bias: polar residues; it reads NNLSFPTSDS. A compositionally biased stretch (acidic residues) spans 1043-1056; sequence DGPDDRESEQEDGA.

As to expression, expressed in brain and testis.

Its subcellular location is the peroxisome. Functionally, binds to type II regulatory subunits of protein kinase A and anchors/targets them. The sequence is that of A-kinase anchor protein 11 (Akap11) from Rattus norvegicus (Rat).